The chain runs to 1178 residues: DNA-directed RNA polymerase subunit beta' (1178 aa).

Zn(2+) is bound by residues Cys-60, Cys-62, Cys-75, and Cys-78. Positions 450, 452, and 454 each coordinate Mg(2+). Residues Cys-795, Cys-869, Cys-876, and Cys-879 each contribute to the Zn(2+) site.

Belongs to the RNA polymerase beta' chain family. As to quaternary structure, the RNAP catalytic core consists of 2 alpha, 1 beta, 1 beta' and 1 omega subunit. When a sigma factor is associated with the core the holoenzyme is formed, which can initiate transcription. Mg(2+) serves as cofactor. Requires Zn(2+) as cofactor.

It carries out the reaction RNA(n) + a ribonucleoside 5'-triphosphate = RNA(n+1) + diphosphate. DNA-dependent RNA polymerase catalyzes the transcription of DNA into RNA using the four ribonucleoside triphosphates as substrates. The protein is DNA-directed RNA polymerase subunit beta' of Clostridium botulinum (strain Langeland / NCTC 10281 / Type F).